The sequence spans 186 residues: Ribosome-recycling factor (186 aa).

This sequence belongs to the RRF family.

The protein localises to the cytoplasm. Its function is as follows. Responsible for the release of ribosomes from messenger RNA at the termination of protein biosynthesis. May increase the efficiency of translation by recycling ribosomes from one round of translation to another. The sequence is that of Ribosome-recycling factor from Methylocella silvestris (strain DSM 15510 / CIP 108128 / LMG 27833 / NCIMB 13906 / BL2).